Consider the following 317-residue polypeptide: Glycerol-3-phosphate dehydrogenase [NAD(P)+] (317 aa).

NADPH is bound by residues S14, F15, R35, and K109. Sn-glycerol 3-phosphate is bound by residues K109 and G137. A141 serves as a coordination point for NADPH. 5 residues coordinate sn-glycerol 3-phosphate: K192, D248, S258, R259, and N260. Residue K192 is the Proton acceptor of the active site. R259 provides a ligand contact to NADPH. Residues L283 and E285 each coordinate NADPH.

This sequence belongs to the NAD-dependent glycerol-3-phosphate dehydrogenase family.

The protein localises to the cytoplasm. It catalyses the reaction sn-glycerol 3-phosphate + NAD(+) = dihydroxyacetone phosphate + NADH + H(+). The catalysed reaction is sn-glycerol 3-phosphate + NADP(+) = dihydroxyacetone phosphate + NADPH + H(+). Its pathway is membrane lipid metabolism; glycerophospholipid metabolism. In terms of biological role, catalyzes the reduction of the glycolytic intermediate dihydroxyacetone phosphate (DHAP) to sn-glycerol 3-phosphate (G3P), the key precursor for phospholipid synthesis. This Rickettsia akari (strain Hartford) protein is Glycerol-3-phosphate dehydrogenase [NAD(P)+].